The primary structure comprises 295 residues: Putative sugar uptake protein YxfA (295 aa).

10 helical membrane passes run Val4–Gly26, Leu33–Arg50, Leu54–Gly72, Val85–Ala107, Phe117–Ala135, Ala156–Trp178, Ile188–Phe206, Tyr213–Ala235, Ala241–Gly263, and Glu270–Val291.

Belongs to the GRP transporter (TC 2.A.7.5) family.

It is found in the cell membrane. The polypeptide is Putative sugar uptake protein YxfA (yxfA) (Lactococcus lactis subsp. lactis (strain IL1403) (Streptococcus lactis)).